Reading from the N-terminus, the 546-residue chain is CTP synthase (546 aa).

Positions 1–266 (MTTRYIFVTG…DQLVTKRFGI (266 aa)) are amidoligase domain. Ser14 contacts CTP. Ser14 is a binding site for UTP. ATP-binding positions include 15–20 (SLGKGI) and Asp72. The Mg(2+) site is built by Asp72 and Glu140. Residues 147–149 (DIE), 187–192 (KTKPTQ), and Lys223 each bind CTP. UTP contacts are provided by residues 187-192 (KTKPTQ) and Lys223. 239 to 241 (KDV) serves as a coordination point for ATP. The region spanning 291 to 542 (TIGMVGKYIE…VAAAYTYQKR (252 aa)) is the Glutamine amidotransferase type-1 domain. Gly352 contacts L-glutamine. The Nucleophile; for glutamine hydrolysis role is filled by Cys379. Residues 380–383 (LGMQ), Glu403, and Arg470 contribute to the L-glutamine site. Catalysis depends on residues His515 and Glu517.

The protein belongs to the CTP synthase family. As to quaternary structure, homotetramer.

The catalysed reaction is UTP + L-glutamine + ATP + H2O = CTP + L-glutamate + ADP + phosphate + 2 H(+). It carries out the reaction L-glutamine + H2O = L-glutamate + NH4(+). It catalyses the reaction UTP + NH4(+) + ATP = CTP + ADP + phosphate + 2 H(+). The protein operates within pyrimidine metabolism; CTP biosynthesis via de novo pathway; CTP from UDP: step 2/2. With respect to regulation, allosterically activated by GTP, when glutamine is the substrate; GTP has no effect on the reaction when ammonia is the substrate. The allosteric effector GTP functions by stabilizing the protein conformation that binds the tetrahedral intermediate(s) formed during glutamine hydrolysis. Inhibited by the product CTP, via allosteric rather than competitive inhibition. Its function is as follows. Catalyzes the ATP-dependent amination of UTP to CTP with either L-glutamine or ammonia as the source of nitrogen. Regulates intracellular CTP levels through interactions with the four ribonucleotide triphosphates. The sequence is that of CTP synthase from Shewanella halifaxensis (strain HAW-EB4).